A 147-amino-acid polypeptide reads, in one-letter code: Large ribosomal subunit protein uL15 (147 aa).

Basic and acidic residues predominate over residues 1–11 (MKLHDLRPAKD). Residues 1-57 (MKLHDLRPAKDAKKKRKRVGRGTGSGRGFTSGRGSKGQNARSGGGVRPTFEGGQTPL) form a disordered region. The span at 21-35 (RGTGSGRGFTSGRGS) shows a compositional bias: gly residues.

This sequence belongs to the universal ribosomal protein uL15 family. Part of the 50S ribosomal subunit.

Functionally, binds to the 23S rRNA. This is Large ribosomal subunit protein uL15 from Halothermothrix orenii (strain H 168 / OCM 544 / DSM 9562).